Consider the following 43-residue polypeptide: uncharacterized protein (43 aa).

The N-terminal stretch at 1 to 17 is a signal peptide; sequence MYRRLLLNLFCMVFLQA.

This is an uncharacterized protein from Helicobacter pylori (strain J99 / ATCC 700824) (Campylobacter pylori J99).